A 194-amino-acid polypeptide reads, in one-letter code: dCTP deaminase (194 aa).

Residues R110–R115, D128, V136–E138, Y171, K178, and Q182 each bind dCTP. Residue E138 is the Proton donor/acceptor of the active site.

The protein belongs to the dCTP deaminase family. As to quaternary structure, homotrimer.

It catalyses the reaction dCTP + H2O + H(+) = dUTP + NH4(+). It functions in the pathway pyrimidine metabolism; dUMP biosynthesis; dUMP from dCTP (dUTP route): step 1/2. Its function is as follows. Catalyzes the deamination of dCTP to dUTP. This Mannheimia succiniciproducens (strain KCTC 0769BP / MBEL55E) protein is dCTP deaminase.